Here is a 213-residue protein sequence, read N- to C-terminus: Ribonuclease HII (213 aa).

Residues 18 to 213 enclose the RNase H type-2 domain; sequence GLYAGVDEVG…RPVKERLAKN (196 aa). 3 residues coordinate a divalent metal cation: Asp24, Glu25, and Asp116.

Belongs to the RNase HII family. Requires Mn(2+) as cofactor. It depends on Mg(2+) as a cofactor.

It localises to the cytoplasm. The catalysed reaction is Endonucleolytic cleavage to 5'-phosphomonoester.. Functionally, endonuclease that specifically degrades the RNA of RNA-DNA hybrids. The sequence is that of Ribonuclease HII from Shewanella sediminis (strain HAW-EB3).